The sequence spans 393 residues: Cytotoxic and regulatory T-cell molecule (393 aa).

Positions 1 to 17 (MWWRVLSLLAWFPLQEA) are cleaved as a signal peptide. Residues 18–114 (SLTNHTETIT…VSTKEVKVIV (97 aa)) form the Ig-like V-type domain. The Extracellular portion of the chain corresponds to 18 to 287 (SLTNHTETIT…YLGLARKKSG (270 aa)). Asn-21, Asn-87, and Asn-178 each carry an N-linked (GlcNAc...) asparagine glycan. 2 disulfides stabilise this stretch: Cys-38–Cys-98 and Cys-141–Cys-196. The region spanning 118-210 (PFKPILEASV…RGLQGRKLVA (93 aa)) is the Ig-like C2-type domain. Positions 225-273 (SDALERNSLSSQDPQQPTSTVSVTEDSSTSEIDKEEKEQTTQDPDLTTE) are disordered. Polar residues predominate over residues 231–241 (NSLSSQDPQQP). Over residues 242 to 254 (TSTVSVTEDSSTS) the composition is skewed to low complexity. The span at 255-264 (EIDKEEKEQT) shows a compositional bias: basic and acidic residues. A helical membrane pass occupies residues 288–308 (ILLLTLVSFLIFILFIIVQLF). The Cytoplasmic portion of the chain corresponds to 309-393 (IMKLRKAHVI…KHIQVPESIV (85 aa)). 2 stretches are compositionally biased toward basic and acidic residues: residues 328 to 348 (HTLE…EEKN) and 374 to 387 (ENVQ…KHIQ). Disordered stretches follow at residues 328–354 (HTLE…SSHP) and 374–393 (ENVQ…ESIV). Residues 390 to 393 (ESIV) carry the PDZ-binding motif.

The protein belongs to the nectin family. In terms of assembly, monomer. May form homodimer (via Ig-like V-type domain). Interacts (via Ig-like V-type domain) with CADM1 (via Ig-like V-type domain); the interaction competes with CRTAM homodimerization and CADM1 homodimerization. Interacts (via PDZ-binding motif) with SCRIB (via PDZ domain 3); the interaction promotes CRTAM and SCRIB polarization in a subset of CD4+ T-cells. In terms of tissue distribution, in the immune system, expression is restricted to activated class-I MHC-restricted cells, including NKT and CD8 T-cells. Strongly expressed in spleen, thymus, small intestine, peripheral blood leukocyte, and in Purkinje neurons in cerebellum. Expressed at much lower levels in testis, ovary, colon, lung and lymphoid tissues.

The protein localises to the cell membrane. In terms of biological role, mediates heterophilic cell-cell adhesion which regulates the activation, differentiation and tissue retention of various T-cell subsets. Interaction with CADM1 promotes natural killer (NK) cell cytotoxicity and IFNG/interferon-gamma secretion by CD8+ T-cells in vitro as well as NK cell-mediated rejection of tumors expressing CADM1 in vivo. Regulates CD8+ T-cell proliferation in response to T-cell receptor (TCR) activation. Appears to be dispensable for CD8+ T-cell-mediated cytotoxicity. Interaction with SCRIB promotes the late phase of cellular polarization of a subset of CD4+ T-cells, which in turn regulates TCR-mediated proliferation and IFNG, IL17 and IL22 production. By interacting with CADM1 on CD8+ dendritic cells, regulates the retention of activated CD8+ T-cells within the draining lymph node. Required for the intestinal retention of intraepithelial CD4+ CD8+ T-cells and, to a lesser extent, intraepithelial and lamina propria CD8+ T-cells and CD4+ T-cells. Interaction with CADM1 promotes the adhesion to gut-associated CD103+ dendritic cells, which may facilitate the expression of gut-homing and adhesion molecules on T-cells and the conversion of CD4+ T-cells into CD4+ CD8+ T-cells. The chain is Cytotoxic and regulatory T-cell molecule from Homo sapiens (Human).